The primary structure comprises 328 residues: Sulfate adenylyltransferase subunit 2 (328 aa).

Positions 305–328 are disordered; it reads ERQGRVIDRDSTGSMERKKAEGYF.

It belongs to the PAPS reductase family. CysD subfamily. As to quaternary structure, heterodimer composed of CysD, the smaller subunit, and CysN.

It catalyses the reaction sulfate + ATP + H(+) = adenosine 5'-phosphosulfate + diphosphate. Its pathway is sulfur metabolism; hydrogen sulfide biosynthesis; sulfite from sulfate: step 1/3. With CysN forms the ATP sulfurylase (ATPS) that catalyzes the adenylation of sulfate producing adenosine 5'-phosphosulfate (APS) and diphosphate, the first enzymatic step in sulfur assimilation pathway. APS synthesis involves the formation of a high-energy phosphoric-sulfuric acid anhydride bond driven by GTP hydrolysis by CysN coupled to ATP hydrolysis by CysD. This is Sulfate adenylyltransferase subunit 2 from Rhodopseudomonas palustris (strain BisB18).